Reading from the N-terminus, the 322-residue chain is MEELRNDWTLKEVEILFSLPFNDLLFQAHRIHRQNFDPNQIQVSSLLNIKTGACPEDCSYCSQSSKYDTGLEREKLMEIDLVLQQAKEAQDIGATRFCMGAAWRNPTDKSLAKVILMIQGVKTMGMETCVTLGMLTQEQAFILKEAGLDYYNHNIDTSKEHYSNVVTTRNFQDRLNTLESVQNANIHVCSGGILGLDESQTDRASMLRSLSNLRTHPDSVPFNLLVPIPGTPFENIEPPTESEFVRTIAVARIMMPKSVVRLSAGRTKMGEAMQALCFFAGANSIFYGEQLLTTDNPNINSDKDLFARLGINQKKVNNLQSV.

The 228-residue stretch at 39 to 266 (NQIQVSSLLN…KSVVRLSAGR (228 aa)) folds into the Radical SAM core domain. The [4Fe-4S] cluster site is built by cysteine 54, cysteine 58, and cysteine 61. Cysteine 98, cysteine 129, cysteine 189, and arginine 261 together coordinate [2Fe-2S] cluster.

It belongs to the radical SAM superfamily. Biotin synthase family. As to quaternary structure, homodimer. The cofactor is [4Fe-4S] cluster. It depends on [2Fe-2S] cluster as a cofactor.

The catalysed reaction is (4R,5S)-dethiobiotin + (sulfur carrier)-SH + 2 reduced [2Fe-2S]-[ferredoxin] + 2 S-adenosyl-L-methionine = (sulfur carrier)-H + biotin + 2 5'-deoxyadenosine + 2 L-methionine + 2 oxidized [2Fe-2S]-[ferredoxin]. The protein operates within cofactor biosynthesis; biotin biosynthesis; biotin from 7,8-diaminononanoate: step 2/2. Its function is as follows. Catalyzes the conversion of dethiobiotin (DTB) to biotin by the insertion of a sulfur atom into dethiobiotin via a radical-based mechanism. In Ruthia magnifica subsp. Calyptogena magnifica, this protein is Biotin synthase.